We begin with the raw amino-acid sequence, 503 residues long: Lysine--tRNA ligase (503 aa).

Residues Glu-412 and Glu-419 each coordinate Mg(2+).

It belongs to the class-II aminoacyl-tRNA synthetase family. In terms of assembly, homodimer. Requires Mg(2+) as cofactor.

It is found in the cytoplasm. It catalyses the reaction tRNA(Lys) + L-lysine + ATP = L-lysyl-tRNA(Lys) + AMP + diphosphate. The protein is Lysine--tRNA ligase of Buchnera aphidicola subsp. Schizaphis graminum (strain Sg).